We begin with the raw amino-acid sequence, 693 residues long: MRNAVDIKTLADVKEKVKHEKRTHCLVLNKYRVNELLKNKDAKIWFLNIFRFPSVLKFREYQGCLVETGPYDGEVLRFIHSYVESLGGGEVSGQVSGQVNDQLSCQMTSHANDSQAGTPLADAPLADCRLIPLNARFNRALHELMQREGKGVLEGVDMRPEEGDERDVAAEGGGVEDVAQQGAAHQDAPPALEKLLRVIKAEGIQIRTIQLQFGYDNMNTSQVLRKVFPSESEVIHKYEMIGHIAHLNFCERFENHKKVIAEIILDKNKSIRTVINKKDSLKNVHRTFTIELLAGEENYLTMLRENDIKVKLNYELMYWNSKLKKERDRIYSLVENNSIVVDVFAGVGIFSLHLSKKNCLCFSNDINLHAYNFMNVNIKLNKRRSILTYNLDARAFVCMLLRLGIFSRDTSTLAMQLGEQNWRNVSLDFVNSAGRDVVDAGKGKKRAADCKVDCKEDCKEDCKEDCKEDCKEDCKEDCKEDCKEDCKEDCEVKDCKAGDSHQSNSHQSNPHESNPHESAPRDKKKKLAHGDANGPLGERPPGVAATHGGEEVPPEPTNNEAEQKAEDAPTNETHQVDINLGIYGDVHVLMNLPQTALDFLDVFRELLHMYSAGQKDPQGRCRRDQMRNVFIHCYFFSKPELFYEHAERNIRMQLGGIPREMKITEIRKVSPSKLMYVVEFNLKDVFSQGDQLG.

S-adenosyl-L-methionine is bound by residues arginine 327, 365–366 (DI), and 392–393 (DA). A disordered region spans residues 497 to 572 (AGDSHQSNSH…QKAEDAPTNE (76 aa)). Low complexity predominate over residues 500–512 (SHQSNSHQSNPHE). Asparagine 591 serves as a coordination point for S-adenosyl-L-methionine.

This sequence belongs to the class I-like SAM-binding methyltransferase superfamily. TRM5/TYW2 family. Monomer.

The protein resides in the mitochondrion matrix. Its subcellular location is the nucleus. The protein localises to the cytoplasm. It catalyses the reaction guanosine(37) in tRNA + S-adenosyl-L-methionine = N(1)-methylguanosine(37) in tRNA + S-adenosyl-L-homocysteine + H(+). Specifically methylates the N1 position of guanosine-37 in various cytoplasmic and mitochondrial tRNAs. Methylation is not dependent on the nature of the nucleoside 5' of the target nucleoside. This is the first step in the biosynthesis of wybutosine (yW), a modified base adjacent to the anticodon of tRNAs and required for accurate decoding. The chain is tRNA (guanine(37)-N(1))-methyltransferase from Plasmodium vivax (strain Salvador I).